Reading from the N-terminus, the 145-residue chain is MTIPFWQEKTLEQMTENEWESLCDGCGKCCLHKLMDEDSDEVYYTNVACSWLNDKTCSCKDYPNRFTSGEECLKLTRDKIDEFHWLPDTCAYRLLSESKPIPEWHPLITGSKSEMHAAGESVRNKVVYEIDVVDWEDHILNHPNR.

Belongs to the UPF0260 family.

The polypeptide is UPF0260 protein VS_0923 (Vibrio atlanticus (strain LGP32) (Vibrio splendidus (strain Mel32))).